The sequence spans 296 residues: Transposase for insertion sequence element IS629 (296 aa).

In terms of domain architecture, Integrase catalytic spans 125–285 (VAERPDQLWV…TPPAEAEKAY (161 aa)).

Involved in the transposition of the insertion sequence. The sequence is that of Transposase for insertion sequence element IS629 from Shigella sonnei.